A 218-amino-acid chain; its full sequence is Cytochrome b6 (218 aa).

A helical membrane pass occupies residues 35-55 (IFYCLGGITLVCFLIQFATGF). Cysteine 38 lines the heme c pocket. Heme b is bound by residues histidine 89 and histidine 103. 3 helical membrane passes run 93–113 (ASMM…TGGF), 119–139 (LTWV…VTGY), and 189–209 (LHTF…FLMI). Residues histidine 190 and histidine 205 each coordinate heme b.

The protein belongs to the cytochrome b family. PetB subfamily. As to quaternary structure, the 4 large subunits of the cytochrome b6-f complex are cytochrome b6, subunit IV (17 kDa polypeptide, PetD), cytochrome f and the Rieske protein, while the 4 small subunits are PetG, PetL, PetM and PetN. The complex functions as a dimer. The cofactor is heme b. Heme c serves as cofactor.

Its subcellular location is the cellular thylakoid membrane. Component of the cytochrome b6-f complex, which mediates electron transfer between photosystem II (PSII) and photosystem I (PSI), cyclic electron flow around PSI, and state transitions. The chain is Cytochrome b6 from Synechococcus sp. (strain CC9605).